The following is a 329-amino-acid chain: DNA-directed RNA polymerase subunit alpha (329 aa).

The tract at residues 1–232 (MQEMLEQLLT…YQLIAFVDLK (232 aa)) is alpha N-terminal domain (alpha-NTD). Positions 246 to 329 (FDPIFLQPVD…PSSLVSKESA (84 aa)) are alpha C-terminal domain (alpha-CTD).

This sequence belongs to the RNA polymerase alpha chain family. In terms of assembly, homodimer. The RNAP catalytic core consists of 2 alpha, 1 beta, 1 beta' and 1 omega subunit. When a sigma factor is associated with the core the holoenzyme is formed, which can initiate transcription.

It carries out the reaction RNA(n) + a ribonucleoside 5'-triphosphate = RNA(n+1) + diphosphate. DNA-dependent RNA polymerase catalyzes the transcription of DNA into RNA using the four ribonucleoside triphosphates as substrates. In Hydrogenovibrio crunogenus (strain DSM 25203 / XCL-2) (Thiomicrospira crunogena), this protein is DNA-directed RNA polymerase subunit alpha.